Here is a 103-residue protein sequence, read N- to C-terminus: A-type ATP synthase subunit F (103 aa).

Belongs to the V-ATPase F subunit family. As to quaternary structure, has multiple subunits with at least A(3), B(3), C, D, E, F, H, I and proteolipid K(x).

It is found in the cell membrane. Functionally, component of the A-type ATP synthase that produces ATP from ADP in the presence of a proton gradient across the membrane. This is A-type ATP synthase subunit F from Pyrococcus abyssi (strain GE5 / Orsay).